A 326-amino-acid chain; its full sequence is Vitamin B12 import system permease protein BtuC (326 aa).

9 consecutive transmembrane segments (helical) span residues 15–35, 61–81, 88–108, 112–132, 146–166, 184–204, 240–260, 274–294, and 302–322; these read WLLC…CAGE, LAVL…QALF, PGLL…VLLG, LPNW…TLIL, LLAG…AIYF, GGVD…LLWI, GWMV…GLVI, VLLP…DIVA, and ELPI…WLLL.

It belongs to the binding-protein-dependent transport system permease family. FecCD subfamily. In terms of assembly, the complex is composed of two ATP-binding proteins (BtuD), two transmembrane proteins (BtuC) and a solute-binding protein (BtuF).

Its subcellular location is the cell inner membrane. Functionally, part of the ABC transporter complex BtuCDF involved in vitamin B12 import. Involved in the translocation of the substrate across the membrane. The protein is Vitamin B12 import system permease protein BtuC of Shigella sonnei (strain Ss046).